A 292-amino-acid polypeptide reads, in one-letter code: Elongation factor Ts (292 aa).

The interval 79–82 is involved in Mg(2+) ion dislocation from EF-Tu; the sequence is TDFV.

It belongs to the EF-Ts family.

It localises to the cytoplasm. Its function is as follows. Associates with the EF-Tu.GDP complex and induces the exchange of GDP to GTP. It remains bound to the aminoacyl-tRNA.EF-Tu.GTP complex up to the GTP hydrolysis stage on the ribosome. The polypeptide is Elongation factor Ts (Staphylococcus haemolyticus (strain JCSC1435)).